Consider the following 417-residue polypeptide: Snake venom metalloproteinase aculysin-1 (417 aa).

The N-terminal stretch at 1–20 (MIQVLLVTICLAAFPYQGSS) is a signal peptide. Positions 21–189 (IMLESGKVND…KKPSWLNLTP (169 aa)) are excised as a propeptide. Positions 197-392 (TSVNLQLIVD…KKPKCIHKKS (196 aa)) constitute a Peptidase M12B domain. 3 disulfides stabilise this stretch: Cys-308–Cys-387, Cys-349–Cys-371, and Cys-351–Cys-354. His-333 is a binding site for Zn(2+). The active site involves Glu-334. Zn(2+) is bound by residues His-337 and His-343. The propeptide occupies 393-417 (LKTDTVSTSVSGNEPLDDNVDGFHA). Positions 398 to 417 (VSTSVSGNEPLDDNVDGFHA) are disordered. The segment covering 407–417 (PLDDNVDGFHA) has biased composition (acidic residues).

The protein belongs to the venom metalloproteinase (M12B) family. P-I subfamily. As to quaternary structure, monomer. The cofactor is Zn(2+). In terms of tissue distribution, expressed by the venom gland.

The protein localises to the secreted. Functionally, this protein is an alkaline zinc metalloprotease from snake venom that possesses weak hemorrhagic activity. The protein is Snake venom metalloproteinase aculysin-1 of Deinagkistrodon acutus (Hundred-pace snake).